A 287-amino-acid chain; its full sequence is ATP synthase gamma chain (287 aa).

Belongs to the ATPase gamma chain family. As to quaternary structure, F-type ATPases have 2 components, CF(1) - the catalytic core - and CF(0) - the membrane proton channel. CF(1) has five subunits: alpha(3), beta(3), gamma(1), delta(1), epsilon(1). CF(0) has three main subunits: a, b and c.

It is found in the cell inner membrane. Produces ATP from ADP in the presence of a proton gradient across the membrane. The gamma chain is believed to be important in regulating ATPase activity and the flow of protons through the CF(0) complex. The protein is ATP synthase gamma chain of Salmonella agona (strain SL483).